The primary structure comprises 275 residues: MPELPEVETTRRGIDTVITGRTLRRLVVREARMRWPIPPALPDLLAGRTVLECGRRGKYLLLRFDHGVQIVHLGMSGSLRRVPEQEAPRKHDHVDWVFDHAVLRLHDPRRFGAVLWHPDEAGPIAAHPLLARLGIEPFDPRFDGRWLHAYFRGRRVAIKQALLAGDAVVGVGNIYASESLFRAGIDPRTAAQRVSAARCDRLAAAIRATLSDALDSGGSTLRDYVGASGEPGAYFAIHAAVYERAGLPCRVCGTPIRRLVQGQRATYFCPSCQKR.

Catalysis depends on Pro-2, which acts as the Schiff-base intermediate with DNA. Glu-3 acts as the Proton donor in catalysis. Lys-58 (proton donor; for beta-elimination activity) is an active-site residue. Residues His-91, Arg-109, and Arg-154 each contribute to the DNA site. The segment at 240 to 274 (AVYERAGLPCRVCGTPIRRLVQGQRATYFCPSCQK) adopts an FPG-type zinc-finger fold. Residue Arg-264 is the Proton donor; for delta-elimination activity of the active site.

It belongs to the FPG family. Monomer. Zn(2+) serves as cofactor.

It catalyses the reaction Hydrolysis of DNA containing ring-opened 7-methylguanine residues, releasing 2,6-diamino-4-hydroxy-5-(N-methyl)formamidopyrimidine.. The catalysed reaction is 2'-deoxyribonucleotide-(2'-deoxyribose 5'-phosphate)-2'-deoxyribonucleotide-DNA = a 3'-end 2'-deoxyribonucleotide-(2,3-dehydro-2,3-deoxyribose 5'-phosphate)-DNA + a 5'-end 5'-phospho-2'-deoxyribonucleoside-DNA + H(+). Its function is as follows. Involved in base excision repair of DNA damaged by oxidation or by mutagenic agents. Acts as a DNA glycosylase that recognizes and removes damaged bases. Has a preference for oxidized purines, such as 7,8-dihydro-8-oxoguanine (8-oxoG). Has AP (apurinic/apyrimidinic) lyase activity and introduces nicks in the DNA strand. Cleaves the DNA backbone by beta-delta elimination to generate a single-strand break at the site of the removed base with both 3'- and 5'-phosphates. In Bordetella pertussis (strain Tohama I / ATCC BAA-589 / NCTC 13251), this protein is Formamidopyrimidine-DNA glycosylase.